The sequence spans 206 residues: Large ribosomal subunit protein uL4 (206 aa).

This sequence belongs to the universal ribosomal protein uL4 family. As to quaternary structure, part of the 50S ribosomal subunit.

Functionally, one of the primary rRNA binding proteins, this protein initially binds near the 5'-end of the 23S rRNA. It is important during the early stages of 50S assembly. It makes multiple contacts with different domains of the 23S rRNA in the assembled 50S subunit and ribosome. Forms part of the polypeptide exit tunnel. This Rhodopseudomonas palustris (strain HaA2) protein is Large ribosomal subunit protein uL4.